A 180-amino-acid polypeptide reads, in one-letter code: Large ribosomal subunit protein uL5 (180 aa).

Belongs to the universal ribosomal protein uL5 family. Part of the 50S ribosomal subunit; part of the 5S rRNA/L5/L18/L25 subcomplex. Contacts the 5S rRNA and the P site tRNA. Forms a bridge to the 30S subunit in the 70S ribosome.

Functionally, this is one of the proteins that bind and probably mediate the attachment of the 5S RNA into the large ribosomal subunit, where it forms part of the central protuberance. In the 70S ribosome it contacts protein S13 of the 30S subunit (bridge B1b), connecting the 2 subunits; this bridge is implicated in subunit movement. Contacts the P site tRNA; the 5S rRNA and some of its associated proteins might help stabilize positioning of ribosome-bound tRNAs. This chain is Large ribosomal subunit protein uL5, found in Streptococcus uberis (strain ATCC BAA-854 / 0140J).